We begin with the raw amino-acid sequence, 393 residues long: Cysteine protease ATG4B (393 aa).

At methionine 1 the chain carries N-acetylmethionine. Position 34 is a phosphoserine (serine 34). Cysteine 74 (nucleophile) is an active-site residue. Residue cysteine 189 is modified to S-nitrosocysteine. Catalysis depends on residues aspartate 278 and histidine 280. 2 positions are modified to S-nitrosocysteine: cysteine 292 and cysteine 301. Cysteine 292 and cysteine 361 form a disulfide bridge. Phosphoserine is present on residues serine 316 and serine 383. The LIR signature appears at 388-391; sequence FEIL. Serine 392 carries the phosphoserine modification.

It belongs to the peptidase C54 family. As to quaternary structure, interacts with PFKP; promoting phosphorylation of ATG4B at Ser-34. Interacts with GBP7. Post-translationally, phosphorylation at Ser-383 and Ser-392 promotes autophagy by increasing protein delipidation activity without affecting proteolytic activation of ATG8 proteins. Phosphorylation at Ser-316 by ULK1 inhibits autophagy by decreasing both proteolytic activation and delipidation activities. Phosphorylation at Ser-316 is dephosphorylated by protein phosphatase 2A (PP2A). Phosphorylation at Ser-34 by AKT2 promotes its hydrolase activity, leading to increased proteolytic activation and delipidation of ATG8 family proteins. Phosphorylation at Ser-34 by AKT1 promotes mitochondrial localization and inhibition of the F1F0-ATP synthase activity, leading to elevation of mitochondrial reactive oxygen species (ROS). In terms of processing, ubiquitinated by RNF5, leading to its degradation by the proteasome. S-nitrosylation in response to high glucose decreases both proteolytic activation and delipidation activities. Post-translationally, O-glycosylated by OGT, leading to increase protease activity, thereby promoting the proteolytic activation of ATG8 family proteins. In terms of processing, forms reversible intrachain disulfide bonds in response to oxidative stress. Forms interchain disulfide bonds, leading to formation of homooligomers in response to oxidation.

It localises to the cytoplasm. The protein localises to the cytosol. Its subcellular location is the cytoplasmic vesicle. The protein resides in the autophagosome. It is found in the endoplasmic reticulum. It localises to the mitochondrion. The catalysed reaction is [protein]-C-terminal L-amino acid-glycyl-phosphatidylethanolamide + H2O = [protein]-C-terminal L-amino acid-glycine + a 1,2-diacyl-sn-glycero-3-phosphoethanolamine. It catalyses the reaction [protein]-C-terminal L-amino acid-glycyl-phosphatidylserine + H2O = [protein]-C-terminal L-amino acid-glycine + a 1,2-diacyl-sn-glycero-3-phospho-L-serine. Inhibited by N-ethylmaleimide. Redox-regulated during autophagy since reducing conditions activate ATG4A whereas an oxidizing environment such as the presence of H(2)O(2) inhibits its activity. The cysteine protease activity compounds is inhibited by styrylquinoline compounds 4-28 and LV-320. In terms of biological role, cysteine protease that plays a key role in autophagy by mediating both proteolytic activation and delipidation of ATG8 family proteins. Required for canonical autophagy (macroautophagy), non-canonical autophagy as well as for mitophagy. The protease activity is required for proteolytic activation of ATG8 family proteins: cleaves the C-terminal amino acid of ATG8 proteins MAP1LC3A, MAP1LC3B, MAP1LC3C, GABARAPL1, GABARAPL2 and GABARAP, to reveal a C-terminal glycine. Exposure of the glycine at the C-terminus is essential for ATG8 proteins conjugation to phosphatidylethanolamine (PE) and insertion to membranes, which is necessary for autophagy. Protease activity is also required to counteract formation of high-molecular weight conjugates of ATG8 proteins (ATG8ylation): acts as a deubiquitinating-like enzyme that removes ATG8 conjugated to other proteins, such as ATG3. In addition to the protease activity, also mediates delipidation of ATG8 family proteins. Catalyzes delipidation of PE-conjugated forms of ATG8 proteins during macroautophagy. Also involved in non-canonical autophagy, a parallel pathway involving conjugation of ATG8 proteins to single membranes at endolysosomal compartments, by catalyzing delipidation of ATG8 proteins conjugated to phosphatidylserine (PS). Compared to other members of the family (ATG4A, ATG4C or ATG4C), constitutes the major protein for proteolytic activation of ATG8 proteins, while it displays weaker delipidation activity than other ATG4 paralogs. Involved in phagophore growth during mitophagy independently of its protease activity and of ATG8 proteins: acts by regulating ATG9A trafficking to mitochondria and promoting phagophore-endoplasmic reticulum contacts during the lipid transfer phase of mitophagy. This is Cysteine protease ATG4B from Rattus norvegicus (Rat).